A 200-amino-acid polypeptide reads, in one-letter code: MSNETNKAQDNQIDEQVESIVEGELLTEGSDEASLMDELTQANFRVEELEKALQEAQSTVDSQKDSVIRAAAEVDNIRRRAAIDVEKARKFALEKFANELLPVLDNMERALQGTDAEAEATKAIYEGVELTAKSFVSAVEKFGLTQVDPQGEAFNPELHQAIGMQPSTDFAANTVMMVMQKGYTLNERLLRPAMVMVSQG.

The protein belongs to the GrpE family. As to quaternary structure, homodimer.

Its subcellular location is the cytoplasm. Its function is as follows. Participates actively in the response to hyperosmotic and heat shock by preventing the aggregation of stress-denatured proteins, in association with DnaK and GrpE. It is the nucleotide exchange factor for DnaK and may function as a thermosensor. Unfolded proteins bind initially to DnaJ; upon interaction with the DnaJ-bound protein, DnaK hydrolyzes its bound ATP, resulting in the formation of a stable complex. GrpE releases ADP from DnaK; ATP binding to DnaK triggers the release of the substrate protein, thus completing the reaction cycle. Several rounds of ATP-dependent interactions between DnaJ, DnaK and GrpE are required for fully efficient folding. The polypeptide is Protein GrpE (Shewanella piezotolerans (strain WP3 / JCM 13877)).